The chain runs to 359 residues: tRNA-specific 2-thiouridylase MnmA (359 aa).

ATP-binding positions include 9–16 (GMSGGVDS) and Met-35. Cys-105 functions as the Nucleophile in the catalytic mechanism. Cysteines 105 and 203 form a disulfide. Position 129 (Gly-129) interacts with ATP. Residues 153–155 (KDQ) are interaction with tRNA. Cys-203 (cysteine persulfide intermediate) is an active-site residue. The segment at 309–310 (RY) is interaction with tRNA.

It belongs to the MnmA/TRMU family.

It is found in the cytoplasm. The enzyme catalyses S-sulfanyl-L-cysteinyl-[protein] + uridine(34) in tRNA + AH2 + ATP = 2-thiouridine(34) in tRNA + L-cysteinyl-[protein] + A + AMP + diphosphate + H(+). Catalyzes the 2-thiolation of uridine at the wobble position (U34) of tRNA, leading to the formation of s(2)U34. In Acetivibrio thermocellus (strain ATCC 27405 / DSM 1237 / JCM 9322 / NBRC 103400 / NCIMB 10682 / NRRL B-4536 / VPI 7372) (Clostridium thermocellum), this protein is tRNA-specific 2-thiouridylase MnmA.